We begin with the raw amino-acid sequence, 432 residues long: Protein trichome birefringence-like 23 (432 aa).

Residues 13–35 (QNTYLIKLVAATLITCLAFRFFV) traverse the membrane as a helical; Signal-anchor for type II membrane protein segment. The GDS motif signature appears at 153 to 155 (GDS). The DCXHWCLPGXXDXWN motif motif lies at 404-418 (DCLHWCLPGPIDHLN).

The protein belongs to the PC-esterase family. TBL subfamily.

It is found in the membrane. May act as a bridging protein that binds pectin and other cell wall polysaccharides. Probably involved in maintaining esterification of pectins. May be involved in the specific O-acetylation of cell wall polymers. This is Protein trichome birefringence-like 23 (TBL23) from Arabidopsis thaliana (Mouse-ear cress).